A 180-amino-acid chain; its full sequence is NADH-quinone oxidoreductase subunit I 1 (180 aa).

4Fe-4S ferredoxin-type domains follow at residues 50 to 80 (LSRD…LQKT) and 90 to 119 (EFFR…LTPD). The [4Fe-4S] cluster site is built by Cys60, Cys63, Cys66, Cys70, Cys99, Cys102, Cys105, and Cys109.

Belongs to the complex I 23 kDa subunit family. NDH-1 is composed of 14 different subunits. Subunits NuoA, H, J, K, L, M, N constitute the membrane sector of the complex. It depends on [4Fe-4S] cluster as a cofactor.

The protein resides in the cell inner membrane. It catalyses the reaction a quinone + NADH + 5 H(+)(in) = a quinol + NAD(+) + 4 H(+)(out). Its function is as follows. NDH-1 shuttles electrons from NADH, via FMN and iron-sulfur (Fe-S) centers, to quinones in the respiratory chain. The immediate electron acceptor for the enzyme in this species is believed to be ubiquinone. Couples the redox reaction to proton translocation (for every two electrons transferred, four hydrogen ions are translocated across the cytoplasmic membrane), and thus conserves the redox energy in a proton gradient. In Nitrosococcus oceani (strain ATCC 19707 / BCRC 17464 / JCM 30415 / NCIMB 11848 / C-107), this protein is NADH-quinone oxidoreductase subunit I 1.